The following is a 320-amino-acid chain: Uroplakin-3b (320 aa).

An N-terminal signal peptide occupies residues 1–29 (MGLPWGQPHLGLQMLLLALNCLRPSLSLG). Over 30-240 (EWGSWMDASS…LHPLFSGRPP (211 aa)) the chain is Lumenal. A glycan (N-linked (GlcNAc...) asparagine) is linked at N133. The chain crosses the membrane as a helical span at residues 241–266 (TLGLLGSLYHALLQPVVAGGGPGAAA). Residues 267–320 (DRLLHGQALHDPPHPTQRGRHTAGGLQAWPGPPPQPQPLAWPLCMGLGEMGRWE) lie on the Cytoplasmic side of the membrane. The segment at 273–303 (QALHDPPHPTQRGRHTAGGLQAWPGPPPQPQ) is disordered.

This sequence belongs to the uroplakin-3 family. Heterodimer with uroplakin-1B (UPK1B).

It localises to the cell membrane. Component of the asymmetric unit membrane (AUM); a highly specialized biomembrane elaborated by terminally differentiated urothelial cells. May play an important role in AUM-cytoskeleton interaction in terminally differentiated urothelial cells. It also contributes to the formation of urothelial glycocalyx which may play an important role in preventing bacterial adherence. The protein is Uroplakin-3b (UPK3B) of Homo sapiens (Human).